A 119-amino-acid chain; its full sequence is Small ribosomal subunit protein bS16 (119 aa).

The disordered stretch occupies residues 81–119 (GLAKRPARNNPKKAEPGQKAKERAAARAEKAGAGDDAAA). Residues 92–113 (KKAEPGQKAKERAAARAEKAGA) are compositionally biased toward basic and acidic residues.

It belongs to the bacterial ribosomal protein bS16 family.

The protein is Small ribosomal subunit protein bS16 of Methylobacterium sp. (strain 4-46).